A 379-amino-acid polypeptide reads, in one-letter code: Homoserine O-acetyltransferase (379 aa).

The 311-residue stretch at 45 to 355 folds into the AB hydrolase-1 domain; it reads NAILILHALT…PHGHDAFLIE (311 aa). Ser-151 serves as the catalytic Nucleophile. Arg-220 lines the substrate pocket. Residues Asp-316 and His-349 contribute to the active site. Position 350 (Asp-350) interacts with substrate.

Belongs to the AB hydrolase superfamily. MetX family. As to quaternary structure, homodimer.

The protein localises to the cytoplasm. The enzyme catalyses L-homoserine + acetyl-CoA = O-acetyl-L-homoserine + CoA. The protein operates within amino-acid biosynthesis; L-methionine biosynthesis via de novo pathway; O-acetyl-L-homoserine from L-homoserine: step 1/1. Its function is as follows. Transfers an acetyl group from acetyl-CoA to L-homoserine, forming acetyl-L-homoserine. This Carboxydothermus hydrogenoformans (strain ATCC BAA-161 / DSM 6008 / Z-2901) protein is Homoserine O-acetyltransferase.